The following is a 262-amino-acid chain: MNKFLIIDGLNLVRRIYAAIPDETDMQSLTERVISACTKLLRVHRPTHVAIVWDGHEISWRKQLYPDYKKGRKPMPEPLAQGLVALQDHLTAMHIGSIYAAAEADDVIATLAIKTAKAQGEAIIVSTDKGFSQLNHRHISQWDHFNQQYLDIAALEQKLGVERSQFLDLMALAGDSGNKIPGIAGIGPKSAAELLKTFRSLPTLFSSLSNLGAKQAKKLAEGKEMARLSYKLAQLQTDLPLNINLKDFRVIDSPPEKTINQD.

Asp105 is a binding site for Mg(2+). In terms of domain architecture, 5'-3' exonuclease spans 162–257; the sequence is ERSQFLDLMA…FRVIDSPPEK (96 aa). 5 residues coordinate K(+): Leu172, Ala173, Pro181, Ile183, and Ile186. The tract at residues 185–190 is interaction with DNA; sequence GIGPKS.

The protein belongs to the Xni family. The cofactor is Mg(2+). K(+) serves as cofactor.

Its function is as follows. Has flap endonuclease activity. During DNA replication, flap endonucleases cleave the 5'-overhanging flap structure that is generated by displacement synthesis when DNA polymerase encounters the 5'-end of a downstream Okazaki fragment. This is Flap endonuclease Xni from Shewanella baltica (strain OS155 / ATCC BAA-1091).